The primary structure comprises 204 residues: MRG/MORF4L-binding protein (204 aa).

The span at 1-15 (MGEAEVGGTGAPGDK) shows a compositional bias: gly residues. The tract at residues 1–27 (MGEAEVGGTGAPGDKGPGEAAPSPAEE) is disordered. At Gly2 the chain carries N-acetylglycine. Ser23 is subject to Phosphoserine. Residue Lys127 forms a Glycyl lysine isopeptide (Lys-Gly) (interchain with G-Cter in SUMO2) linkage. Composition is skewed to basic and acidic residues over residues 128-140 (EEMK…HSGA) and 153-175 (ALEK…EGAD). The interval 128-204 (EEMKEDVDPH…SPSAAKRRRT (77 aa)) is disordered. The segment covering 189 to 198 (ANSNPSSPSA) has biased composition (low complexity). Phosphoserine occurs at positions 191 and 195.

The protein belongs to the EAF7 family. As to quaternary structure, component of the NuA4 histone acetyltransferase complex which contains the catalytic subunit KAT5/TIP60 and the subunits EP400, TRRAP/PAF400, BRD8/SMAP, EPC1, DMAP1/DNMAP1, RUVBL1/TIP49, RUVBL2, ING3, actin, ACTL6A/BAF53A, MORF4L1/MRG15, MORF4L2/MRGX, MRGBP, YEATS4/GAS41, VPS72/YL1 and MEAF6. MRGBP may interact directly with MORF4L1/MRG15 and MORF4L2/MRGX.

The protein localises to the nucleus. Its function is as follows. Component of the NuA4 histone acetyltransferase (HAT) complex which is involved in transcriptional activation of select genes principally by acetylation of nucleosomal histones H4 and H2A. This modification may both alter nucleosome - DNA interactions and promote interaction of the modified histones with other proteins which positively regulate transcription. This complex may be required for the activation of transcriptional programs associated with oncogene and proto-oncogene mediated growth induction, tumor suppressor mediated growth arrest and replicative senescence, apoptosis, and DNA repair. NuA4 may also play a direct role in DNA repair when recruited to sites of DNA damage. This chain is MRG/MORF4L-binding protein (Mrgbp), found in Mus musculus (Mouse).